Here is a 621-residue protein sequence, read N- to C-terminus: Beta-conglycinin alpha' subunit (621 aa).

A signal peptide spans 1–24 (MMRARFPLLLLGVVFLASVSVSFG). A propeptide spanning residues 25–62 (IAYWEKQNPSHNKCLRSCNSEKDSYRNQACHARCNLLK) is cleaved from the precursor. The tract at residues 64 to 214 (EEEEECEEGQ…RHKNKNPFHF (151 aa)) is disordered. Composition is skewed to basic and acidic residues over residues 80–92 (QHPE…HGEK) and 111–173 (PHQE…QGKE). Positions 174–196 (SEEEEEDQDEDEEQDKESQESEG) are enriched in acidic residues. Cupin type-1 domains lie at 212 to 370 (FHFN…EEIN) and 422 to 583 (FNLR…KDIE). 2 N-linked (GlcNAc...) asparagine glycosylation sites follow: Asn277 and Asn533. Positions 612–621 (PLSSILRAFY) are necessary for sorting to protein storage vacuole.

It belongs to the 7S seed storage protein family. As to quaternary structure, the alpha-, alpha'-, and beta-subunits associate in various combinations to form trimeric proteins.

The protein resides in the vacuole. The protein localises to the aleurone grain. It localises to the endoplasmic reticulum. It is found in the protein storage vacuole. Its function is as follows. Seed storage protein. Accumulates during seed development and is hydrolyzed after germination to provide a carbon and nitrogen source for the developing seedling. In Glycine max (Soybean), this protein is Beta-conglycinin alpha' subunit.